The primary structure comprises 284 residues: L-ribulose-5-phosphate 3-epimerase UlaE (284 aa).

It belongs to the L-ribulose-5-phosphate 3-epimerase family.

It catalyses the reaction L-ribulose 5-phosphate = L-xylulose 5-phosphate. It functions in the pathway cofactor degradation; L-ascorbate degradation; D-xylulose 5-phosphate from L-ascorbate: step 3/4. Catalyzes the isomerization of L-xylulose-5-phosphate to L-ribulose-5-phosphate. Is involved in the anaerobic L-ascorbate utilization. In Shigella flexneri, this protein is L-ribulose-5-phosphate 3-epimerase UlaE.